Here is a 305-residue protein sequence, read N- to C-terminus: UDP-3-O-acyl-N-acetylglucosamine deacetylase (305 aa).

Residues His79, His238, and Asp242 each contribute to the Zn(2+) site. His265 functions as the Proton donor in the catalytic mechanism.

It belongs to the LpxC family. The cofactor is Zn(2+).

The enzyme catalyses a UDP-3-O-[(3R)-3-hydroxyacyl]-N-acetyl-alpha-D-glucosamine + H2O = a UDP-3-O-[(3R)-3-hydroxyacyl]-alpha-D-glucosamine + acetate. It participates in glycolipid biosynthesis; lipid IV(A) biosynthesis; lipid IV(A) from (3R)-3-hydroxytetradecanoyl-[acyl-carrier-protein] and UDP-N-acetyl-alpha-D-glucosamine: step 2/6. In terms of biological role, catalyzes the hydrolysis of UDP-3-O-myristoyl-N-acetylglucosamine to form UDP-3-O-myristoylglucosamine and acetate, the committed step in lipid A biosynthesis. The protein is UDP-3-O-acyl-N-acetylglucosamine deacetylase of Citrobacter koseri (strain ATCC BAA-895 / CDC 4225-83 / SGSC4696).